The primary structure comprises 328 residues: Cytochrome c biogenesis protein CcsA (328 aa).

Transmembrane regions (helical) follow at residues 13 to 33, 46 to 66, 73 to 93, 101 to 121, 146 to 166, 234 to 254, 263 to 283, and 295 to 315; these read ISFSVISIVLTIYFLTLLVNL, GIVITFFGITGLLFTRWIYSG, LYESLIFLSWAFSIIHMVSYF, LNAITAPSAIFIQGFATSGLL, MILGYGALLCGSLLSMALLVI, IISLGFIFLTVGILSGAVWAN, WDPKETWAFITWTIFAIYLHI, and AIVASIGFILIWICYFGVNLL.

It belongs to the CcmF/CycK/Ccl1/NrfE/CcsA family. As to quaternary structure, may interact with Ccs1.

The protein localises to the plastid. The protein resides in the chloroplast thylakoid membrane. In terms of biological role, required during biogenesis of c-type cytochromes (cytochrome c6 and cytochrome f) at the step of heme attachment. This is Cytochrome c biogenesis protein CcsA from Nasturtium officinale (Watercress).